The primary structure comprises 156 residues: Methylated-DNA--protein-cysteine methyltransferase (156 aa).

The active-site Nucleophile; methyl group acceptor is the C120.

It belongs to the MGMT family.

The protein localises to the cytoplasm. The catalysed reaction is a 6-O-methyl-2'-deoxyguanosine in DNA + L-cysteinyl-[protein] = S-methyl-L-cysteinyl-[protein] + a 2'-deoxyguanosine in DNA. The enzyme catalyses a 4-O-methyl-thymidine in DNA + L-cysteinyl-[protein] = a thymidine in DNA + S-methyl-L-cysteinyl-[protein]. In terms of biological role, involved in the cellular defense against the biological effects of O6-methylguanine (O6-MeG) and O4-methylthymine (O4-MeT) in DNA. Repairs the methylated nucleobase in DNA by stoichiometrically transferring the methyl group to a cysteine residue in the enzyme. This is a suicide reaction: the enzyme is irreversibly inactivated. The polypeptide is Methylated-DNA--protein-cysteine methyltransferase (Metallosphaera sedula (strain ATCC 51363 / DSM 5348 / JCM 9185 / NBRC 15509 / TH2)).